Consider the following 1663-residue polypeptide: MATDGASCEPDLSRAPEDAAGAAAEAAKKEFDVDTLSKSELRMLLSVMEGELEARDLVIEALRARRKEVFIQERYGRFNLNDPFLALQRDYEAGAGDKEKKPVCTNPLSILEAVMAHCKKMQERMSAQLAAAESRQKKLEMEKLQLQALEQEHKKLAARLEEERGKNKQVVLMLVKECKQLSGKVIEEAQKLEDIMAKLEEEKKKTNELEEELSAEKRRSTEMEAQMEKQLSEFDTEREQLRAKLNREEAHTTDLKEEIDKMKKMIEQLKRGSDSKPSLSLPRKTKDRRLVSISVGTEGTVTRSVACQTDLVTESADHVKKLPLTMPVKPSTGSPLVSANAKGSVCTSATMARPGIDRQASHGDLIGSSVPAFPPPSANRIEENGPSTDSTPDPTSSTPPLPSNAAPPTTQTPGIAPQNSQAPPMHSLHSPCANASLHPGLNPRIQAARFRFQGNANDPDQNGNTTQSPPSRDMSPTSRDNLVAKQLARNTVTQALSRFTSPQAGAPSRPGAPPTGDVGTHPPVGRTSLKTHGVARVDRGNPPPIPPKKPGLSQTPSPPHPQLKVIIDSSRASNTGAKVDNKTVASPPSSLPQGNRVTNEDNLPKSSSPQLPPKPSIDLTVAPAGCTVSALATSQVGAWPAATPGLNQPACSDSSLVIPTTIAFCSSINPVSASSCRPGASDSLLVTASGWSPSLTPLLMSGGPAPLAGRPTLLQQAAAQGNVTLLSMLLNEEGLDINYSCEDGHSALYSAAKNGHTDCVRLLLSAEAQINAADKNGFTPLCAAAAQGHFECVELLIAYDANINHAADGGQTPLYLACKNENKECIKLLLEAGTNRSVKTTDGWTPVHAAVDTGNVDSLKLLMYHRIPACGNSFNEEESESGVFDLDGGEESPEGIFKPVVPADLINHANREGWTAAHIAASKGFKNCLEILCRHGGLEPERRDKCNRTVHDVATDDCKHLLENLNALKIPLRISVGEIEPSNYGSDDLECENTICALNIRKQTSWDDFSKAVSQALTNHFQAISSDGWWSLEDVTCNNTTNSNIGLSATSIRSITLGNVPWSVGQSFTQSPWDFMRKNKAEHITVLLSGPQEGCLSSVTYASMIPLQMMQNYLRLVEQYHNVIFHGPEGSLQDYIVHQLALCLKHRQMAAGFSCEIVRAEVDAGFSKEQLLDLFISSACLIPVKQSPSKKKIIIILENLEKSSLSELLRDFLAPLENRSTESPCTFQKGNGMSECYYFHENCFLMGTIAKACLQGSDLLVQQHFRWVQLRWDGEPMQGLLQRFLRRKVVNKFKGQAPSPCDPVCKIVDWALSVWRQLNSCLARLGTPEALLGPKYFLSCPVVPGHAQVTVKWMSKLWNGVIAPRVQEAILSRASVKRQPGFGQTTAKRHPSQGQQAVVKAALSILLNKAVLHGCPLPRAELDQHTADFKGGSFPLSIVSSYNSCNKKKGESGAWRKVNTSPRRKSGRFSLPTWNKPDLSTEGIKNKTISQLNYNRNASLSKQKSLENDLSLTLNLDQRLSLGSDDEADLVKELQSMCSSKSESDISKIADSRDDLRMFDSSGNNPVLSATINNLRMPVSQKEVSPLSSHQTTECSNSKSKTELGVSRVKSFLPVPRSKVTLCSQNTKRSSSSSNTRQIEINNNSKEENWNLHKNEHLDKHNK.

5 disordered regions span residues 1–23 (MATD…AGAA), 203–222 (KKKT…RSTE), 358–440 (RQAS…LHPG), 454–479 (GNAN…PTSR), and 498–616 (RFTS…PKPS). Positions 119–276 (KKMQERMSAQ…EQLKRGSDSK (158 aa)) form a coiled coil. The segment covering 386-396 (PSTDSTPDPTS) has biased composition (low complexity). Residues 411–422 (QTPGIAPQNSQA) show a composition bias toward polar residues. At Arg-498 the chain carries Asymmetric dimethylarginine. Residues 583 to 597 (TVASPPSSLPQGNRV) show a composition bias toward polar residues. ANK repeat units lie at residues 709 to 739 (GRPT…DINY), 743 to 772 (DGHS…QINA), 776 to 805 (NGFT…NINH), 809 to 838 (GGQT…NRSV), 842 to 871 (DGWT…PACG), and 912 to 942 (EGWT…EPER). The interval 1447–1477 (KKKGESGAWRKVNTSPRRKSGRFSLPTWNKP) is disordered. Ser-1524 carries the post-translational modification Phosphoserine. Disordered stretches follow at residues 1581–1602 (QKEV…KSKT) and 1618–1663 (SKVT…KHNK). Polar residues predominate over residues 1582–1599 (KEVSPLSSHQTTECSNSK). Low complexity predominate over residues 1624–1638 (SQNTKRSSSSSNTRQ). Positions 1645–1663 (SKEENWNLHKNEHLDKHNK) are enriched in basic and acidic residues.

Interacts with CTTN/cortactin SH3 domain. Interacts with STRN, STRN4/zinedin and MOB4/phocein; this interactions mediate the association with the STRIPAK core complex and may regulate dendritic spine distribution of the STRIPAK complex in hippocampal neurons. Activation of glutamate receptors weakens the interaction with STRN and STRN4.

The protein resides in the cytoplasm. Its subcellular location is the cell cortex. The protein localises to the cell projection. It localises to the dendritic spine. In terms of biological role, regulates the dendritic spine distribution of CTTN/cortactin in hippocampal neurons, and thus controls dendritic spinogenesis and dendritic spine maintenance. Associates with the striatin-interacting phosphatase and kinase (STRIPAK) core complex to regulate dendritic spine distribution of the STRIPAK complex in hippocampal neurons. The sequence is that of Cortactin-binding protein 2 (CTTNBP2) from Papio anubis (Olive baboon).